The following is a 456-amino-acid chain: 26S proteasome non-ATPase regulatory subunit 12 (456 aa).

An N-acetylalanine modification is found at A2. K92 is covalently cross-linked (Glycyl lysine isopeptide (Lys-Gly) (interchain with G-Cter in SUMO1); alternate). Residue K92 forms a Glycyl lysine isopeptide (Lys-Gly) (interchain with G-Cter in SUMO2); alternate linkage. 2 positions are modified to N6-acetyllysine: K221 and K368. Residues 242 to 420 enclose the PCI domain; sequence SICKHYRAIY…GIINFQRPKD (179 aa).

The protein belongs to the proteasome subunit p55 family. Component of the 19S proteasome regulatory particle complex. The 26S proteasome consists of a 20S core particle (CP) and two 19S regulatory subunits (RP). The regulatory particle is made of a lid composed of 9 subunits including PSMD12, a base containing 6 ATPases and few additional components. Interacts with ERCC6.

Its function is as follows. Component of the 26S proteasome, a multiprotein complex involved in the ATP-dependent degradation of ubiquitinated proteins. This complex plays a key role in the maintenance of protein homeostasis by removing misfolded or damaged proteins, which could impair cellular functions, and by removing proteins whose functions are no longer required. Therefore, the proteasome participates in numerous cellular processes, including cell cycle progression, apoptosis, or DNA damage repair. In Homo sapiens (Human), this protein is 26S proteasome non-ATPase regulatory subunit 12 (PSMD12).